Reading from the N-terminus, the 402-residue chain is 8-amino-7-oxononanoate synthase (402 aa).

A substrate-binding site is contributed by arginine 26. Glycine 114–tyrosine 115 serves as a coordination point for pyridoxal 5'-phosphate. Histidine 139 contributes to the substrate binding site. Pyridoxal 5'-phosphate contacts are provided by serine 182, histidine 210, and threonine 239. The residue at position 242 (lysine 242) is an N6-(pyridoxal phosphate)lysine. Threonine 359 contributes to the substrate binding site.

Belongs to the class-II pyridoxal-phosphate-dependent aminotransferase family. BioF subfamily. In terms of assembly, homodimer. Pyridoxal 5'-phosphate serves as cofactor.

The catalysed reaction is 6-carboxyhexanoyl-[ACP] + L-alanine + H(+) = (8S)-8-amino-7-oxononanoate + holo-[ACP] + CO2. It functions in the pathway cofactor biosynthesis; biotin biosynthesis. Functionally, catalyzes the decarboxylative condensation of pimeloyl-[acyl-carrier protein] and L-alanine to produce 8-amino-7-oxononanoate (AON), [acyl-carrier protein], and carbon dioxide. The chain is 8-amino-7-oxononanoate synthase from Halorhodospira halophila (strain DSM 244 / SL1) (Ectothiorhodospira halophila (strain DSM 244 / SL1)).